The chain runs to 177 residues: MAHWRTPSRIFLVGPMGAGKSTVGRELANLLGLEFIDSDAAIEARTGVSIPWIFDIEGEAGFRAREAAVIDELTGRDGVVVATGGGAVTTPANRDLLGARGVVVYLYTPVSVQLQRTRHDTNRPLLQSDDPEARLQSLLAERDPLYREVADVVVETTGGRARSVARRIVEALQGQPS.

17-22 (GAGKST) is an ATP binding site. S21 serves as a coordination point for Mg(2+). 3 residues coordinate substrate: D39, R63, and G85. Residue R123 coordinates ATP. Residue R142 coordinates substrate. R160 provides a ligand contact to ATP.

The protein belongs to the shikimate kinase family. Monomer. Mg(2+) is required as a cofactor.

It is found in the cytoplasm. It carries out the reaction shikimate + ATP = 3-phosphoshikimate + ADP + H(+). It functions in the pathway metabolic intermediate biosynthesis; chorismate biosynthesis; chorismate from D-erythrose 4-phosphate and phosphoenolpyruvate: step 5/7. Its function is as follows. Catalyzes the specific phosphorylation of the 3-hydroxyl group of shikimic acid using ATP as a cosubstrate. The protein is Shikimate kinase of Halorhodospira halophila (strain DSM 244 / SL1) (Ectothiorhodospira halophila (strain DSM 244 / SL1)).